The chain runs to 344 residues: Hydrophobic dipeptide epimerase (344 aa).

Residues Thr126 and 151–153 (KIK) each bind substrate. Residues Asp184, Glu210, and Asp235 each coordinate Mg(2+). Substrate contacts are provided by residues Lys257 and 307 to 309 (DLD).

It belongs to the mandelate racemase/muconate lactonizing enzyme family. It depends on Mg(2+) as a cofactor.

In terms of biological role, dipeptide epimerase with a preference for hydrophobic substrates. Catalyzes the epimerization of L-Ala-L-Thr, L-Ala-L-Met, L-Ala-L-His, L-Ala-L-Phe, L-Ala-L-Tyr, L-Ala-L-Trp, L-Ile-L-Ala, L-Ile-L-Ser, L-Ile-L-Met, L-Ile-L-His, L-Ile-L-Phe, L-Ile-L-Tyr, L-Ile-L-Trp, L-Phe-L-Met, L-Phe-L-His, L-Phe-L-Phe, L-Phe-L-Tyr, L-Phe-L-Trp, L-Phe-L-Ser, L-Phe-L-Thr and L-Phe-L-Lys (in vitro). This chain is Hydrophobic dipeptide epimerase, found in Roseobacter litoralis (strain ATCC 49566 / DSM 6996 / JCM 21268 / NBRC 15278 / OCh 149).